The chain runs to 260 residues: Protein SVS1 (260 aa).

The N-terminal stretch at 1–19 (MIFKILCSLLLVTSNFASA) is a signal peptide. Asn-23, Asn-249, and Asn-256 each carry an N-linked (GlcNAc...) asparagine glycan.

Required for vanadate resistance. This chain is Protein SVS1 (SVS1), found in Saccharomyces cerevisiae (strain ATCC 204508 / S288c) (Baker's yeast).